We begin with the raw amino-acid sequence, 202 residues long: Histone H1 (202 aa).

Disordered stretches follow at residues 1–50 and 114–202; these read MTAI…VTHP and YKLS…KIAV. Over residues 18 to 38 the composition is skewed to basic and acidic residues; the sequence is EASKVKEQAPATDKKPRAPKE. Residues 48-118 enclose the H15 domain; sequence THPPYFQMIK…KIKASYKLSE (71 aa). Residues 160-202 are compositionally biased toward basic residues; sequence KAKATPKPKKVGAKRTRKSTPAKAKQPKSIKSPAAKRAKKIAV.

It belongs to the histone H1/H5 family.

The protein localises to the nucleus. It localises to the chromosome. Functionally, histones H1 are necessary for the condensation of nucleosome chains into higher-order structures. In Solanum pennellii (Tomato), this protein is Histone H1.